Reading from the N-terminus, the 244-residue chain is UPF0173 metal-dependent hydrolase RoseRS_3945 (244 aa).

The protein belongs to the UPF0173 family.

The protein is UPF0173 metal-dependent hydrolase RoseRS_3945 of Roseiflexus sp. (strain RS-1).